The primary structure comprises 428 residues: Enolase (428 aa).

Gln163 lines the (2R)-2-phosphoglycerate pocket. Glu205 (proton donor) is an active-site residue. Mg(2+) is bound by residues Asp242, Glu286, and Asp313. Residues Lys338, Arg367, Ser368, and Lys389 each coordinate (2R)-2-phosphoglycerate. Residue Lys338 is the Proton acceptor of the active site.

The protein belongs to the enolase family. Requires Mg(2+) as cofactor.

Its subcellular location is the cytoplasm. It is found in the secreted. It localises to the cell surface. It carries out the reaction (2R)-2-phosphoglycerate = phosphoenolpyruvate + H2O. It functions in the pathway carbohydrate degradation; glycolysis; pyruvate from D-glyceraldehyde 3-phosphate: step 4/5. Functionally, catalyzes the reversible conversion of 2-phosphoglycerate (2-PG) into phosphoenolpyruvate (PEP). It is essential for the degradation of carbohydrates via glycolysis. The chain is Enolase from Acidovorax sp. (strain JS42).